The following is a 367-amino-acid chain: Heme A synthase (367 aa).

Transmembrane regions (helical) follow at residues 25-45 (ALRF…LVGG), 111-131 (LIAR…WLTG), 139-159 (WPLV…WWMV), 174-194 (LATH…IMRG), and 210-230 (GFAA…ALVA). His-274 lines the heme pocket. The next 3 membrane-spanning stretches (helical) occupy residues 276-296 (IGAY…LRAA), 305-325 (AILL…TLLM), and 327-347 (VPLH…GFAV). Residue His-335 coordinates heme.

It belongs to the COX15/CtaA family. Type 2 subfamily. Interacts with CtaB. The cofactor is heme b.

The protein localises to the cell membrane. It carries out the reaction Fe(II)-heme o + 2 A + H2O = Fe(II)-heme a + 2 AH2. Its pathway is porphyrin-containing compound metabolism; heme A biosynthesis; heme A from heme O: step 1/1. In terms of biological role, catalyzes the conversion of heme O to heme A by two successive hydroxylations of the methyl group at C8. The first hydroxylation forms heme I, the second hydroxylation results in an unstable dihydroxymethyl group, which spontaneously dehydrates, resulting in the formyl group of heme A. The sequence is that of Heme A synthase from Rhizobium johnstonii (strain DSM 114642 / LMG 32736 / 3841) (Rhizobium leguminosarum bv. viciae).